We begin with the raw amino-acid sequence, 250 residues long: Hydroxyacylglutathione hydrolase (250 aa).

Zn(2+) is bound by residues His52, His54, Asp56, His57, His107, Asp128, and His166.

It belongs to the metallo-beta-lactamase superfamily. Glyoxalase II family. As to quaternary structure, monomer. The cofactor is Zn(2+).

The catalysed reaction is an S-(2-hydroxyacyl)glutathione + H2O = a 2-hydroxy carboxylate + glutathione + H(+). It participates in secondary metabolite metabolism; methylglyoxal degradation; (R)-lactate from methylglyoxal: step 2/2. In terms of biological role, thiolesterase that catalyzes the hydrolysis of S-D-lactoyl-glutathione to form glutathione and D-lactic acid. This is Hydroxyacylglutathione hydrolase from Neisseria meningitidis serogroup A / serotype 4A (strain DSM 15465 / Z2491).